A 1332-amino-acid chain; its full sequence is Misshapen-like kinase 1 (1332 aa).

One can recognise a Protein kinase domain in the interval 25–289 (FELVEVVGNG…TEQLLKFPFI (265 aa)). Residues 31–39 (VGNGTYGQV) and Lys54 contribute to the ATP site. The Proton acceptor role is filled by Asp153. Disordered regions lie at residues 300–347 (IQLK…NVPG), 363–383 (KSNS…QRDP), and 395–887 (QRRI…GTMV). A compositionally biased stretch (acidic residues) spans 317–333 (EETEYEYSGSEEEDDSH). Phosphoserine occurs at positions 324 and 326. Residues 371–380 (QQQQLQQQQQ) show a composition bias toward low complexity. Residues 396–466 (RRIEEQKEER…EEQRQSERLQ (71 aa)) show a composition bias toward basic and acidic residues. A compositionally biased stretch (low complexity) spans 479–497 (LQQQQQQQQLQKQQQQQLL). Arg501 and Arg509 each carry omega-N-methylarginine. Residues 518–528 (AWAREVEERTR) are compositionally biased toward basic and acidic residues. Pro residues predominate over residues 547–561 (PEPPIPQASPGPPGP). Positions 598-608 (RSQSLQDQPTR) are enriched in polar residues. At Ser641 the chain carries Phosphoserine. Positions 670–682 (QRTSSIATALNTS) are enriched in polar residues. Ser701 carries the post-translational modification Phosphoserine. Over residues 716-729 (PKPPGPPAQPPGPP) the composition is skewed to pro residues. Residues 736–748 (DLRRSDPGWERSD) are compositionally biased toward basic and acidic residues. 5 positions are modified to phosphoserine: Ser754, Ser763, Ser777, Ser778, and Ser782. Residues 804-821 (LLKERTLDEAPRPPKKAM) are compositionally biased toward basic and acidic residues. Residues 828–841 (EEVESSEDDEEEGE) are compositionally biased toward acidic residues. The mediates interaction with RAP2A stretch occupies residues 866–1332 (MVVHDVEEIT…TLNRNCIMNW (467 aa)). At Thr891 the chain carries Phosphothreonine. Residues 902 to 943 (DSNGYTNLPDVVQPSHSPTENSKGQSPPSKDGSGDYQSRGLV) form a disordered region. Residues 915-929 (PSHSPTENSKGQSPP) show a composition bias toward polar residues. The CNH domain occupies 1019–1306 (NSEILCAALW…KFLCERNDKV (288 aa)).

The protein belongs to the protein kinase superfamily. STE Ser/Thr protein kinase family. STE20 subfamily. As to quaternary structure, interacts with TANC1. Interacts with RAP2A. Isoform 4 interacts with NCK1. Mg(2+) serves as cofactor. Autophosphorylated. Expressed in the brain, isoform 2 is more abundant than isoform 1. Isoform 3 is ubiquitously expressed. Isoform 1 is most abundant in the skeletal muscle. Isoform 4 is ubiquitously expressed with relative high levels in brain, skeletal muscle, pancreas and testis.

It is found in the cytoplasm. Its subcellular location is the postsynaptic density. It localises to the cell projection. The protein resides in the axon. The protein localises to the dendrite. It is found in the golgi apparatus. The catalysed reaction is L-seryl-[protein] + ATP = O-phospho-L-seryl-[protein] + ADP + H(+). It carries out the reaction L-threonyl-[protein] + ATP = O-phospho-L-threonyl-[protein] + ADP + H(+). Serine/threonine kinase which acts as a negative regulator of Ras-related Rap2-mediated signal transduction to control neuronal structure and AMPA receptor trafficking. Required for normal synaptic density, dendrite complexity, as well as surface AMPA receptor expression in hippocampal neurons. Can activate the JNK and MAPK14/p38 pathways and mediates stimulation of the stress-activated protein kinase MAPK14/p38 MAPK downstream of the Raf/ERK pathway. Phosphorylates TANC1 upon stimulation by RAP2A, MBP and SMAD1. Has an essential function in negative selection of thymocytes, perhaps by coupling NCK1 to activation of JNK1. Activator of the Hippo signaling pathway which plays a pivotal role in organ size control and tumor suppression by restricting proliferation and promoting apoptosis. MAP4Ks act in parallel to and are partially redundant with STK3/MST2 and STK4/MST2 in the phosphorylation and activation of LATS1/2, and establish MAP4Ks as components of the expanded Hippo pathway. Functionally, isoform 4 can activate the JNK pathway. Involved in the regulation of actin cytoskeleton reorganization, cell-matrix adhesion, cell-cell adhesion and cell migration. In Homo sapiens (Human), this protein is Misshapen-like kinase 1.